Consider the following 634-residue polypeptide: 1-deoxy-D-xylulose-5-phosphate synthase (634 aa).

Thiamine diphosphate contacts are provided by residues His-74 and 115 to 117 (AHS). Residue Asp-146 participates in Mg(2+) binding. Thiamine diphosphate contacts are provided by residues 147-148 (GA), Asn-176, Tyr-283, and Glu-365. Residue Asn-176 coordinates Mg(2+).

The protein belongs to the transketolase family. DXPS subfamily. As to quaternary structure, homodimer. Mg(2+) is required as a cofactor. It depends on thiamine diphosphate as a cofactor.

The catalysed reaction is D-glyceraldehyde 3-phosphate + pyruvate + H(+) = 1-deoxy-D-xylulose 5-phosphate + CO2. It functions in the pathway metabolic intermediate biosynthesis; 1-deoxy-D-xylulose 5-phosphate biosynthesis; 1-deoxy-D-xylulose 5-phosphate from D-glyceraldehyde 3-phosphate and pyruvate: step 1/1. Functionally, catalyzes the acyloin condensation reaction between C atoms 2 and 3 of pyruvate and glyceraldehyde 3-phosphate to yield 1-deoxy-D-xylulose-5-phosphate (DXP). The chain is 1-deoxy-D-xylulose-5-phosphate synthase from Burkholderia mallei (strain ATCC 23344).